A 122-amino-acid chain; its full sequence is MKTSRKITTQRRHRRIRRKVFGTAERPRLAVFRSHRHIYAQVIDDVAQHTLASASTLDRELREKFKETGTATQEAAALVGRSVAERALQMGISRVVFDRGGKLYHGRVQALAEAAREAGLQF.

This sequence belongs to the universal ribosomal protein uL18 family. As to quaternary structure, part of the 50S ribosomal subunit; part of the 5S rRNA/L5/L18/L25 subcomplex. Contacts the 5S and 23S rRNAs.

Functionally, this is one of the proteins that bind and probably mediate the attachment of the 5S RNA into the large ribosomal subunit, where it forms part of the central protuberance. In Synechococcus sp. (strain JA-2-3B'a(2-13)) (Cyanobacteria bacterium Yellowstone B-Prime), this protein is Large ribosomal subunit protein uL18.